Consider the following 207-residue polypeptide: MDKIALKITFSAETPKYAQSVLTEYVNFVSQYSLNQTNQEFKQGFNLRLDELRFSKEQIEENLTEEKKVQVENLTNALDIAKKAGIKDFSRGNNISDSKLADGTYLFILAEKYLQAQLDIAKNTPVVYPANYYITDRQLFKLNKLASQLELVEDVKTYYYLSSPDYPVVKDNPKRSLILAIGFIIGILLPTFFILLGSVIQTNKKQS.

Residues 177 to 197 traverse the membrane as a helical segment; that stretch reads LILAIGFIIGILLPTFFILLG.

The protein localises to the membrane. This is an uncharacterized protein from Haemophilus influenzae (strain ATCC 51907 / DSM 11121 / KW20 / Rd).